The chain runs to 354 residues: Guanine nucleotide-binding protein G(i) subunit alpha-3 (354 aa).

Glycine 2 is lipidated: N-myristoyl glycine. The S-palmitoyl cysteine moiety is linked to residue cysteine 3. Positions 32–354 (KEVKLLLLGA…KNNLKECGLY (323 aa)) constitute a G-alpha domain. The segment at 35–48 (KLLLLGAGESGKST) is G1 motif. GTP is bound by residues glycine 42, glutamate 43, serine 44, glycine 45, lysine 46, serine 47, threonine 48, aspartate 150, serine 151, leucine 175, arginine 176, threonine 177, arginine 178, valine 179, lysine 180, threonine 181, valine 201, glycine 203, asparagine 269, lysine 270, aspartate 272, leucine 273, cysteine 325, alanine 326, and threonine 327. Mg(2+) is bound at residue serine 47. The tract at residues 173 to 181 (DVLRTRVKT) is G2 motif. Residue threonine 181 participates in Mg(2+) binding. The tract at residues 196–205 (FKMFDVGGQR) is G3 motif. The G4 motif stretch occupies residues 265–272 (ILFLNKKD). The segment at 324–329 (TCATDT) is G5 motif.

It belongs to the G-alpha family. G(i/o/t/z) subfamily. Heterotrimeric G proteins are composed of 3 units; alpha, beta and gamma. The alpha subunit contains the guanine nucleotide binding site. GTP binding causes dissociation of the heterotrimer, liberating the individual subunits so that they can interact with downstream effector proteins. Forms a complex with CCDC88A/GIV and EGFR which leads to enhanced EGFR signaling and triggering of cell migration; ligand stimulation is required for recruitment of GNAI3 to the complex. Interacts (inactive GDP-bound form) with CCDC88A/GIV (via GBA motif); the interaction leads to activation of GNAI3. Interacts (inactive GDP-bound form) with CCDC88C/DAPLE (via GBA motif); the interaction leads to activation of GNAI3. Interacts (inactive GDP-bound form) with NUCB1 (via GBA motif) and NUCB2 (via GBA motif); the interaction leads to activation of GNAI3. Interacts (inactive GDP-bound form) with PLCD4 (via GBA motif); the interaction leads to activation of GNAI3. Interacts with INSR; the interaction is probably mediated by CCDC88A/GIV. Interacts with GPSM1. Interacts (GDP-bound form) with GPSM2 (via GoLoco domains). Does not interact with RGS2. Interacts with RGS8 and RGS10; this strongly enhances the intrinsic GTPase activity. Interacts with RGS16; this strongly enhances the intrinsic GTPase activity. Interacts with RGS12. Interacts (via active GTP- or inactive GDP-bound form) with RGS14. Interacts (via active GTP-bound form) with TRPC5 (via ANK repeats) in a homotetrameric ion channel; the interaction is direct and activates the channel activity.

The protein resides in the cytoplasm. The protein localises to the cell membrane. It is found in the cytoskeleton. It localises to the microtubule organizing center. Its subcellular location is the centrosome. Heterotrimeric guanine nucleotide-binding proteins (G proteins) function as transducers downstream of G protein-coupled receptors (GPCRs) in numerous signaling cascades. The alpha chain contains the guanine nucleotide binding site and alternates between an active, GTP-bound state and an inactive, GDP-bound state. Signaling by an activated GPCR promotes GDP release and GTP binding. The alpha subunit has a low GTPase activity that converts bound GTP to GDP, thereby terminating the signal. Both GDP release and GTP hydrolysis are modulated by numerous regulatory proteins. Signaling is mediated via effector proteins, such as adenylate cyclase. Inhibits adenylate cyclase activity, leading to decreased intracellular cAMP levels. Stimulates the activity of receptor-regulated K(+) channels. The active GTP-bound form prevents the association of RGS14 with centrosomes and is required for the translocation of RGS14 from the cytoplasm to the plasma membrane. May play a role in cell division. The active GTP-bound form activates the calcium permeant TRPC5 ion channels. In Mus musculus (Mouse), this protein is Guanine nucleotide-binding protein G(i) subunit alpha-3 (Gnai3).